A 495-amino-acid polypeptide reads, in one-letter code: Transcription termination/antitermination protein NusA (495 aa).

The 66-residue stretch at 135-200 (GQIITGIVKK…RGAQLFLSRS (66 aa)) folds into the S1 motif domain. The KH domain maps to 302 to 370 (HHTMDIAVDS…KNLNVSEKVI (69 aa)). Tandem repeats lie at residues 364 to 414 (NVSE…KNGL) and 439 to 489 (GMNE…RNIC). Residues 364 to 489 (NVSEKVIKTL…LLIMAARNIC (126 aa)) form a 2 X 51 AA approximate repeats region.

It belongs to the NusA family. Monomer. Binds directly to the core enzyme of the DNA-dependent RNA polymerase and to nascent RNA.

It localises to the cytoplasm. Participates in both transcription termination and antitermination. This is Transcription termination/antitermination protein NusA from Buchnera aphidicola subsp. Schizaphis graminum (strain Sg).